Here is a 335-residue protein sequence, read N- to C-terminus: Cell division protein ZipA (335 aa).

At 1–4 the chain is on the periplasmic side; it reads MDLN. The helical transmembrane segment at 5 to 25 threads the bilayer; that stretch reads AILIILGVIALIILVAHGIWS. At 26 to 335 the chain is on the cytoplasmic side; it reads NRCEKSQYFE…AERDYLARVS (310 aa).

Belongs to the ZipA family. Interacts with FtsZ via their C-terminal domains.

It localises to the cell inner membrane. Its function is as follows. Essential cell division protein that stabilizes the FtsZ protofilaments by cross-linking them and that serves as a cytoplasmic membrane anchor for the Z ring. Also required for the recruitment to the septal ring of downstream cell division proteins. In Histophilus somni (strain 129Pt) (Haemophilus somnus), this protein is Cell division protein ZipA.